Reading from the N-terminus, the 384-residue chain is 1-deoxy-D-xylulose 5-phosphate reductoisomerase (384 aa).

NADPH contacts are provided by T10, G11, S12, I13, G36, N38, and N122. K123 provides a ligand contact to 1-deoxy-D-xylulose 5-phosphate. E124 serves as a coordination point for NADPH. Mn(2+) is bound at residue D148. 1-deoxy-D-xylulose 5-phosphate is bound by residues S149, E150, S174, and H197. E150 serves as a coordination point for Mn(2+). Residue G203 coordinates NADPH. 1-deoxy-D-xylulose 5-phosphate is bound by residues S210, N215, K216, and E219. E219 is a Mn(2+) binding site.

It belongs to the DXR family. Mg(2+) serves as cofactor. Requires Mn(2+) as cofactor.

The enzyme catalyses 2-C-methyl-D-erythritol 4-phosphate + NADP(+) = 1-deoxy-D-xylulose 5-phosphate + NADPH + H(+). It participates in isoprenoid biosynthesis; isopentenyl diphosphate biosynthesis via DXP pathway; isopentenyl diphosphate from 1-deoxy-D-xylulose 5-phosphate: step 1/6. Functionally, catalyzes the NADPH-dependent rearrangement and reduction of 1-deoxy-D-xylulose-5-phosphate (DXP) to 2-C-methyl-D-erythritol 4-phosphate (MEP). This chain is 1-deoxy-D-xylulose 5-phosphate reductoisomerase, found in Geobacter metallireducens (strain ATCC 53774 / DSM 7210 / GS-15).